Consider the following 971-residue polypeptide: uncharacterized protein (971 aa).

A run of 13 helical transmembrane segments spans residues 11 to 31 (WLLK…GIIF), 516 to 536 (FASS…ALGI), 547 to 567 (LALA…GGVV), 569 to 589 (VFSF…LITL), 615 to 635 (FFTM…VIYL), 651 to 671 (AITS…LFVS), 727 to 747 (LLFI…LYLG), 763 to 783 (STGI…YSLP), 795 to 815 (IALI…NFIF), 817 to 837 (IDQS…FFQA), 878 to 898 (IGSS…FGGI), 900 to 920 (GTIN…SVFV), and 923 to 943 (LPLF…YVQI).

The protein resides in the cell membrane. This is an uncharacterized protein from Mycoplasma pneumoniae (strain ATCC 29342 / M129 / Subtype 1) (Mycoplasmoides pneumoniae).